The primary structure comprises 614 residues: BTB/POZ domain-containing protein At5g48800 (614 aa).

One can recognise a BTB domain in the interval 43–111; it reads SDITIEVNGG…CYGINFEITS (69 aa). An NPH3 domain is found at 219–484; the sequence is DWWIEDLSVL…VQVLYFEQLK (266 aa). Phosphotyrosine is present on tyrosine 425. Disordered regions lie at residues 492-525 and 583-614; these read SYSD…KDNY and GHSS…ASTD. Over residues 507-521 the composition is skewed to polar residues; it reads SWRINSGALSATMSP. A coiled-coil region spans residues 522–562; it reads KDNYASLRRENRELKLELARLRMRLNDLEKEHICMKRDMQR. Residues 583–597 show a composition bias toward low complexity; sequence GHSSSRGSSSPSKQS.

Belongs to the NPH3 family.

It functions in the pathway protein modification; protein ubiquitination. Functionally, may act as a substrate-specific adapter of an E3 ubiquitin-protein ligase complex (CUL3-RBX1-BTB) which mediates the ubiquitination and subsequent proteasomal degradation of target proteins. This is BTB/POZ domain-containing protein At5g48800 from Arabidopsis thaliana (Mouse-ear cress).